A 528-amino-acid chain; its full sequence is Tyrosine--tRNA ligase, cytoplasmic (528 aa).

Residue M1 is modified to N-acetylmethionine. G2 carries the N-acetylglycine; in Tyrosine--tRNA ligase, cytoplasmic, N-terminally processed modification. Y39 lines the L-tyrosine pocket. Y39 contacts trans-resveratrol. A 'HIGH' region motif is present at residues 44–52; sequence TTGKPHVAY. Positions 166, 170, 173, and 188 each coordinate L-tyrosine. Residues Q170 and D173 each coordinate trans-resveratrol. K197 carries the N6-acetyllysine modification. S205 carries the post-translational modification Phosphoserine. K206 bears the N6-acetyllysine mark. Residues 222-226 carry the 'KMSKS' region motif; it reads KMSSS. Positions 242 to 247 match the Nuclear localization signal motif; that stretch reads KKKLKK. Residues 339 to 363 form a disordered region; it reads AAYPDPSKQKPMAKGPAKNSEPEEV. A tRNA-binding domain is found at 364–468; the sequence is IPSRLDIRVG…AGSAPGERVF (105 aa). Phosphoserine is present on S386. 3 positions are modified to N6-acetyllysine: K474, K482, and K490.

It belongs to the class-I aminoacyl-tRNA synthetase family. In terms of assembly, homodimer. Interacts (when binding to resveratrol) with PARP1; interaction stimulates the poly-ADP-ribosyltransferase activity of PARP1.

The protein localises to the cytoplasm. Its subcellular location is the nucleus. The enzyme catalyses tRNA(Tyr) + L-tyrosine + ATP = L-tyrosyl-tRNA(Tyr) + AMP + diphosphate + H(+). Its activity is regulated as follows. Resveratrol strongly inhibits the tyrosine--tRNA ligase activity. Tyrosine--tRNA ligase that catalyzes the attachment of tyrosine to tRNA(Tyr) in a two-step reaction: tyrosine is first activated by ATP to form Tyr-AMP and then transferred to the acceptor end of tRNA(Tyr). Also acts as a positive regulator of poly-ADP-ribosylation in the nucleus, independently of its tyrosine--tRNA ligase activity. Activity is switched upon resveratrol-binding: resveratrol strongly inhibits the tyrosine--tRNA ligase activity and promotes relocalization to the nucleus, where YARS1 specifically stimulates the poly-ADP-ribosyltransferase activity of PARP1. This chain is Tyrosine--tRNA ligase, cytoplasmic (YARS1), found in Pongo abelii (Sumatran orangutan).